The chain runs to 368 residues: Interferon-stimulated 20 kDa exonuclease-like 2 (368 aa).

Disordered stretches follow at residues 33-107 (FLEQ…APSK) and 127-187 (PKTK…PTVP). A compositionally biased stretch (polar residues) spans 42–54 (KKNQPPNKVSKLN). Residues 77-96 (KKKEAAASKRDSERSKDKKA) show a composition bias toward basic and acidic residues. Over residues 131 to 145 (STQKKGSKKKSLKKK) the composition is skewed to basic residues. The Exonuclease domain maps to 194 to 368 (MVAIDCEMVG…QHLAQNPPEN (175 aa)).

It is found in the nucleus. It localises to the nucleolus. 3'-&gt; 5'-exoribonuclease involved in ribosome biogenesis in the processing of the 12S pre-rRNA. Displays a strong specificity for a 3'-end containing a free hydroxyl group. The protein is Interferon-stimulated 20 kDa exonuclease-like 2 (Isg20l2) of Mus musculus (Mouse).